Reading from the N-terminus, the 757-residue chain is Double zinc ribbon and ankyrin repeat-containing protein 1 (757 aa).

2 DZANK-type zinc fingers span residues 230 to 290 and 359 to 407; these read CAHC…VVCE and CSRC…GSCG. ANK repeat units lie at residues 631–662 and 666–695; these read ENRLLLEEVGSTGKGRLSVLEQLLDEGADPNC and QGRPAVIVAVVNKHFEAIPVLAQRGADIDQ.

Interacts with NINL. Associates with DYNC1H1 and multiple dynein intermediate and light chains as well as actin-binding proteins. In terms of tissue distribution, expressed in retina.

The protein resides in the cell projection. Its subcellular location is the cilium. Functionally, involved in vesicle transport in photoreceptor cells. This Rattus norvegicus (Rat) protein is Double zinc ribbon and ankyrin repeat-containing protein 1.